Reading from the N-terminus, the 273-residue chain is Cytosolic sulfotransferase 4 (273 aa).

Position 74–79 (74–79 (KCGTTW)) interacts with 3'-phosphoadenylyl sulfate. Catalysis depends on His-121, which acts as the Proton acceptor. 3'-phosphoadenylyl sulfate-binding positions include Arg-143 and 239–241 (RKG).

Belongs to the sulfotransferase 1 family.

The protein localises to the cytoplasm. Its function is as follows. Sulfotransferase that utilizes 3'-phospho-5'-adenylyl sulfate (PAPS) as sulfonate donor. The polypeptide is Cytosolic sulfotransferase 4 (SOT4) (Arabidopsis thaliana (Mouse-ear cress)).